We begin with the raw amino-acid sequence, 40 residues long: Large ribosomal subunit protein bL36B (40 aa).

The protein belongs to the bacterial ribosomal protein bL36 family.

The sequence is that of Large ribosomal subunit protein bL36B from Leifsonia xyli subsp. xyli (strain CTCB07).